The sequence spans 235 residues: Small ribosomal subunit protein uS2 (235 aa).

This sequence belongs to the universal ribosomal protein uS2 family.

The chain is Small ribosomal subunit protein uS2 from Thermoanaerobacter pseudethanolicus (strain ATCC 33223 / 39E) (Clostridium thermohydrosulfuricum).